A 106-amino-acid chain; its full sequence is Iron-sulfur cluster assembly protein CyaY (106 aa).

It belongs to the frataxin family.

Involved in iron-sulfur (Fe-S) cluster assembly. May act as a regulator of Fe-S biogenesis. This is Iron-sulfur cluster assembly protein CyaY from Salmonella heidelberg (strain SL476).